The chain runs to 113 residues: Non-structural protein 1 (113 aa).

Belongs to the pneumovirus non-structural protein 1 family.

The protein resides in the host cytoplasm. It localises to the host mitochondrion. In terms of biological role, may play a minor role in antagonizing the type I IFN-mediated antiviral response. Additionally, NS1 may serve some inhibitory role in viral transcription and RNA replication. This Mus musculus (Mouse) protein is Non-structural protein 1 (1C).